We begin with the raw amino-acid sequence, 457 residues long: Argininosuccinate lyase (457 aa).

This sequence belongs to the lyase 1 family. Argininosuccinate lyase subfamily.

The protein localises to the cytoplasm. It carries out the reaction 2-(N(omega)-L-arginino)succinate = fumarate + L-arginine. The protein operates within amino-acid biosynthesis; L-arginine biosynthesis; L-arginine from L-ornithine and carbamoyl phosphate: step 3/3. This Aquifex aeolicus (strain VF5) protein is Argininosuccinate lyase.